The sequence spans 498 residues: Glycerol kinase (498 aa).

Thr12 contacts ADP. Residues Thr12, Thr13, and Ser14 each coordinate ATP. Thr12 serves as a coordination point for sn-glycerol 3-phosphate. Arg16 is a binding site for ADP. Sn-glycerol 3-phosphate contacts are provided by Arg82, Glu83, Tyr135, and Asp245. Residues Arg82, Glu83, Tyr135, Asp245, and Gln246 each coordinate glycerol. ADP contacts are provided by Thr267 and Gly310. Residues Thr267, Gly310, Gln314, and Gly411 each contribute to the ATP site. ADP is bound by residues Gly411 and Asn415.

Belongs to the FGGY kinase family. Homotetramer and homodimer (in equilibrium).

It carries out the reaction glycerol + ATP = sn-glycerol 3-phosphate + ADP + H(+). The protein operates within polyol metabolism; glycerol degradation via glycerol kinase pathway; sn-glycerol 3-phosphate from glycerol: step 1/1. Its activity is regulated as follows. Activated by phosphorylation and inhibited by fructose 1,6-bisphosphate (FBP). Its function is as follows. Key enzyme in the regulation of glycerol uptake and metabolism. Catalyzes the phosphorylation of glycerol to yield sn-glycerol 3-phosphate. This is Glycerol kinase from Clostridium botulinum (strain Alaska E43 / Type E3).